The primary structure comprises 350 residues: Phenylalanine--tRNA ligase alpha subunit (350 aa).

Glu271 contributes to the Mg(2+) binding site.

Belongs to the class-II aminoacyl-tRNA synthetase family. Phe-tRNA synthetase alpha subunit type 1 subfamily. As to quaternary structure, tetramer of two alpha and two beta subunits. It depends on Mg(2+) as a cofactor.

The protein localises to the cytoplasm. It carries out the reaction tRNA(Phe) + L-phenylalanine + ATP = L-phenylalanyl-tRNA(Phe) + AMP + diphosphate + H(+). The protein is Phenylalanine--tRNA ligase alpha subunit of Delftia acidovorans (strain DSM 14801 / SPH-1).